We begin with the raw amino-acid sequence, 172 residues long: ATP synthase subunit b (172 aa).

A helical transmembrane segment spans residues 5–24; sequence LLMLLLLGSVSLFANEAAAS.

The protein belongs to the ATPase B chain family. In terms of assembly, F-type ATPases have 2 components, F(1) - the catalytic core - and F(0) - the membrane proton channel. F(1) has five subunits: alpha(3), beta(3), gamma(1), delta(1), epsilon(1). F(0) has three main subunits: a(1), b(2) and c(10-14). The alpha and beta chains form an alternating ring which encloses part of the gamma chain. F(1) is attached to F(0) by a central stalk formed by the gamma and epsilon chains, while a peripheral stalk is formed by the delta and b chains.

The protein localises to the cell inner membrane. F(1)F(0) ATP synthase produces ATP from ADP in the presence of a proton or sodium gradient. F-type ATPases consist of two structural domains, F(1) containing the extramembraneous catalytic core and F(0) containing the membrane proton channel, linked together by a central stalk and a peripheral stalk. During catalysis, ATP synthesis in the catalytic domain of F(1) is coupled via a rotary mechanism of the central stalk subunits to proton translocation. In terms of biological role, component of the F(0) channel, it forms part of the peripheral stalk, linking F(1) to F(0). This is ATP synthase subunit b from Nitratiruptor sp. (strain SB155-2).